Consider the following 956-residue polypeptide: GAS2-like protein 2B (956 aa).

The region spanning 23-150 is the Calponin-homology (CH) domain; the sequence is YAMKEDLAEW…CLLELARRAS (128 aa). The GAR domain occupies 191 to 263; sequence CDFKNLDQMV…HYLDKHDPCH (73 aa). Polar residues-rich tracts occupy residues 332 to 353 and 381 to 390; these read SSSY…QTPP and DPQQLGNPQS. Disordered stretches follow at residues 332-361, 378-406, 853-885, and 914-956; these read SSSY…SMSI, DTQD…ASQL, RPKI…SRNN, and VNSE…ESWV. Residues 859–868 show a composition bias toward basic and acidic residues; it reads RRDNRPEKKP.

Belongs to the GAS2 family.

The protein resides in the cytoplasm. It is found in the cytoskeleton. The protein localises to the cilium basal body. Functionally, together with gas2l2.L, regulates ciliary orientation and performance. The sequence is that of GAS2-like protein 2B from Xenopus laevis (African clawed frog).